The primary structure comprises 1144 residues: Alpha-mannosidase 2 (1144 aa).

Residues 1-5 (MKLSR) are Cytoplasmic-facing. Residues 6-26 (QFTVFGSAIFCVVIFSLYLML) traverse the membrane as a helical; Signal-anchor for type II membrane protein segment. The Lumenal segment spans residues 27-1144 (DRGHLDYPRN…EISTFRIQLR (1118 aa)). A glycan (N-linked (GlcNAc...) asparagine) is linked at Asn-78. A phosphoserine mark is found at Ser-80 and Ser-82. Asn-93 carries N-linked (GlcNAc...) asparagine glycosylation. Residues His-175, Asp-177, Asp-289, and His-569 each contribute to the Zn(2+) site. The active-site Nucleophile is Asp-289. N-linked (GlcNAc...) asparagine glycosylation is present at Asn-1125.

This sequence belongs to the glycosyl hydrolase 38 family. Homodimer; disulfide-linked. The cofactor is Zn(2+). Glycosylated.

Its subcellular location is the golgi apparatus membrane. It catalyses the reaction N(4)-{beta-D-GlcNAc-(1-&gt;2)-alpha-D-Man-(1-&gt;3)-[alpha-D-Man-(1-&gt;3)-[alpha-D-Man-(1-&gt;6)]-alpha-D-Man-(1-&gt;6)]-beta-D-Man-(1-&gt;4)-beta-D-GlcNAc-(1-&gt;4)-beta-D-GlcNAc}-L-asparaginyl-[protein] + 2 H2O = 2 alpha-D-mannopyranose + an N(4)-{beta-D-GlcNAc-(1-&gt;2)-alpha-D-Man-(1-&gt;3)-[alpha-D-Man-(1-&gt;6)]-beta-D-Man-(1-&gt;4)-beta-D-GlcNAc-(1-&gt;4)-beta-D-GlcNAc}-L-asparaginyl-[protein]. It participates in protein modification; protein glycosylation. Functionally, catalyzes the first committed step in the biosynthesis of complex N-glycans. It controls conversion of high mannose to complex N-glycans; the final hydrolytic step in the N-glycan maturation pathway. The polypeptide is Alpha-mannosidase 2 (MAN2A1) (Homo sapiens (Human)).